The sequence spans 31 residues: Cycloviolacin-O25 (31 aa).

Residues 1 to 31 (DIFCGETCAFIPCITHVPGTCSCKSKVCYFN) constitute a cross-link (cyclopeptide (Asp-Asn)). 3 disulfides stabilise this stretch: cysteine 4-cysteine 21, cysteine 8-cysteine 23, and cysteine 13-cysteine 28.

In terms of processing, this is a cyclic peptide. In terms of tissue distribution, expressed in roots and runners but not in leaves, petals and petioles (at protein level).

In terms of biological role, probably participates in a plant defense mechanism. In Viola odorata (Sweet violet), this protein is Cycloviolacin-O25.